Here is a 227-residue protein sequence, read N- to C-terminus: Phosphoribosylformylglycinamidine synthase subunit PurQ (227 aa).

The Glutamine amidotransferase type-1 domain maps to 3–225 (FAVIVFPGSN…LKQWRETYVV (223 aa)). Cysteine 86 serves as the catalytic Nucleophile. Residues histidine 194 and glutamate 196 contribute to the active site.

Part of the FGAM synthase complex composed of 1 PurL, 1 PurQ and 2 PurS subunits.

The protein resides in the cytoplasm. It catalyses the reaction N(2)-formyl-N(1)-(5-phospho-beta-D-ribosyl)glycinamide + L-glutamine + ATP + H2O = 2-formamido-N(1)-(5-O-phospho-beta-D-ribosyl)acetamidine + L-glutamate + ADP + phosphate + H(+). It carries out the reaction L-glutamine + H2O = L-glutamate + NH4(+). Its pathway is purine metabolism; IMP biosynthesis via de novo pathway; 5-amino-1-(5-phospho-D-ribosyl)imidazole from N(2)-formyl-N(1)-(5-phospho-D-ribosyl)glycinamide: step 1/2. Part of the phosphoribosylformylglycinamidine synthase complex involved in the purines biosynthetic pathway. Catalyzes the ATP-dependent conversion of formylglycinamide ribonucleotide (FGAR) and glutamine to yield formylglycinamidine ribonucleotide (FGAM) and glutamate. The FGAM synthase complex is composed of three subunits. PurQ produces an ammonia molecule by converting glutamine to glutamate. PurL transfers the ammonia molecule to FGAR to form FGAM in an ATP-dependent manner. PurS interacts with PurQ and PurL and is thought to assist in the transfer of the ammonia molecule from PurQ to PurL. In Bacillus cereus (strain B4264), this protein is Phosphoribosylformylglycinamidine synthase subunit PurQ.